The chain runs to 136 residues: Small ribosomal subunit protein uS9 (136 aa).

The protein belongs to the universal ribosomal protein uS9 family.

The chain is Small ribosomal subunit protein uS9 from Borrelia garinii subsp. bavariensis (strain ATCC BAA-2496 / DSM 23469 / PBi) (Borreliella bavariensis).